The sequence spans 533 residues: Glucose-6-phosphate exchanger SLC37A1 (533 aa).

Residues 18 to 38 (QWYRAFIFILTFLLYASFHLS) form a helical membrane-spanning segment. An N-linked (GlcNAc...) asparagine glycan is attached at Asn-81. A run of 4 helical transmembrane segments spans residues 100-120 (GALDYSFLCAYAVGMYLSGII), 129-149 (YLTFGMLASGAFTALFGLGYF), 157-177 (FYVVTQVINGLVQTTGWPSVV), and 222-242 (SFVVPGAIVAAMGIVCFLFLI). Asn-263 carries an N-linked (GlcNAc...) asparagine glycan. 7 helical membrane-spanning segments follow: residues 304 to 324 (VVILPGDGGSGTAAISFTGAL), 334 to 354 (LCLLFAKLVSYTFLFWLPLYI), 366 to 386 (GELSTLFDVGGIFGGILAGVI), 394 to 414 (ASTCGLMLLLAAPTLYIFSTV), 423 to 443 (IAMLLLSGALVSGPYTLITTA), 466 to 486 (AIIDGTGSVGAALGPLLAGLL), and 490 to 510 (GWSNVFYMLMFADACALLFLI).

The protein belongs to the major facilitator superfamily. Organophosphate:Pi antiporter (OPA) (TC 2.A.1.4) family. As to expression, expressed in numerous tissues, with highest expression in pancreas, kidney, bone marrow, spleen, liver, small intestine, as well as in fetal brain, liver and spleen.

Its subcellular location is the endoplasmic reticulum membrane. It carries out the reaction D-glucose 6-phosphate(in) + phosphate(out) = D-glucose 6-phosphate(out) + phosphate(in). Its activity is regulated as follows. Inhibited by vanadate but not by chlorogenic acid. Inorganic phosphate and glucose-6-phosphate antiporter. May transport cytoplasmic glucose-6-phosphate into the lumen of the endoplasmic reticulum and translocate inorganic phosphate into the opposite direction. Independent of a lumenal glucose-6-phosphatase. May not play a role in homeostatic regulation of blood glucose levels. In Homo sapiens (Human), this protein is Glucose-6-phosphate exchanger SLC37A1.